Here is a 496-residue protein sequence, read N- to C-terminus: Guanosine-5'-triphosphate,3'-diphosphate pyrophosphatase (496 aa).

It belongs to the GppA/Ppx family. GppA subfamily.

The catalysed reaction is guanosine 3'-diphosphate 5'-triphosphate + H2O = guanosine 3',5'-bis(diphosphate) + phosphate + H(+). Its pathway is purine metabolism; ppGpp biosynthesis; ppGpp from GTP: step 2/2. Catalyzes the conversion of pppGpp to ppGpp. Guanosine pentaphosphate (pppGpp) is a cytoplasmic signaling molecule which together with ppGpp controls the 'stringent response', an adaptive process that allows bacteria to respond to amino acid starvation, resulting in the coordinated regulation of numerous cellular activities. This chain is Guanosine-5'-triphosphate,3'-diphosphate pyrophosphatase, found in Aeromonas salmonicida (strain A449).